The following is a 154-amino-acid chain: ISGMSGRKASGSSPTSPINANKVENEDAFLEEVAEEKPHVKPYFTKTILDMDVVEGSAARFDCKVEGYPDPEVMWFKDDNPVKESRHFQIDYDEEGNCSLTISEVCGDDDAKYTCKAVNSLGEATCTAELLVETMGKEGEGEGEGEEDEEEEEE.

A disordered region spans residues 1–24 (ISGMSGRKASGSSPTSPINANKVE). Over residues 10-19 (SGSSPTSPIN) the composition is skewed to polar residues. In terms of domain architecture, Ig-like C2-type spans 42 to 133 (PYFTKTILDM…ATCTAELLVE (92 aa)). The disordered stretch occupies residues 134 to 154 (TMGKEGEGEGEGEEDEEEEEE). A compositionally biased stretch (acidic residues) spans 141-154 (GEGEGEEDEEEEEE).

It belongs to the protein kinase superfamily. CAMK Ser/Thr protein kinase family. Binds calmodulin.

Its function is as follows. Corresponds to the C-terminus of smooth muscle myosin light chain kinase. The chain is Telokin from Meleagris gallopavo (Wild turkey).